Reading from the N-terminus, the 481-residue chain is Pyruvate kinase (481 aa).

Residue arginine 36 coordinates substrate. Positions 38, 40, and 70 each coordinate K(+). Residue 38 to 41 participates in ATP binding; that stretch reads NFSH. ATP contacts are provided by arginine 77 and lysine 160. Glutamate 225 is a binding site for Mg(2+). 3 residues coordinate substrate: glycine 251, aspartate 252, and threonine 284. Aspartate 252 lines the Mg(2+) pocket.

Belongs to the pyruvate kinase family. Homotetramer. Mg(2+) is required as a cofactor. It depends on K(+) as a cofactor.

The catalysed reaction is pyruvate + ATP = phosphoenolpyruvate + ADP + H(+). The protein operates within carbohydrate degradation; glycolysis; pyruvate from D-glyceraldehyde 3-phosphate: step 5/5. Allosterically activated by AMP and by several sugar phosphates. Belongs to type II PK. The protein is Pyruvate kinase (pykA) of Buchnera aphidicola subsp. Schizaphis graminum (strain Sg).